A 1905-amino-acid chain; its full sequence is Tudor domain-containing 6-like (1905 aa).

Tudor domains follow at residues 1 to 30 (MVEVYFIDHGNTEMVDWYNVKKLPAELREM), 215 to 279 (YERG…LFDL), and 435 to 491 (SVTP…AYEL). A disordered region spans residues 564–795 (SRAEGSFGNS…SKLTPPLSKL (232 aa)). Over residues 573–591 (SEKRNQLNDLDRGGRKETT) the composition is skewed to basic and acidic residues. Polar residues predominate over residues 592–602 (SKFQPYSQGSK). The segment covering 622–631 (FQTKEREQFE) has biased composition (basic and acidic residues). Composition is skewed to polar residues over residues 651-660 (VQKNMSQSGF) and 687-704 (LYSQGRETPSMSQNSSYS). Residues 715 to 726 (RSKERQVSEHKQ) are compositionally biased toward basic and acidic residues. Polar residues-rich tracts occupy residues 746-766 (KASQNGSSSQTEAFWSSGSDQ) and 774-787 (NASQQRRSTFQESK). 2 consecutive Tudor domains span residues 853–910 (YVNL…LLSI) and 1060–1118 (EIEV…IAAI). 4 disordered regions span residues 1213-1245 (IEDNVIPSQADEDDHSEPSEEPCASESIETPAV), 1449-1599 (EDFE…TETE), 1655-1682 (VEDLDTENQESQICISGSDNRSKESGPV), and 1827-1905 (ESPA…APSV). 2 stretches are compositionally biased toward acidic residues: residues 1491–1500 (EAEGLEDQDQ) and 1522–1535 (EQAEDLVPEEDPGT). Positions 1553–1588 (SQEHKDFPEQEEDRVAEHKNDISEPDLQSKEQKEDL) are enriched in basic and acidic residues. Over residues 1663–1673 (QESQICISGSD) the composition is skewed to polar residues. The segment covering 1876–1887 (FEPETDDMEQME) has biased composition (acidic residues).

As to quaternary structure, interacts with FRGY2 (a component of messenger ribonucleoprotein (mRNP) particle) during germ cell development. In terms of tissue distribution, expressed in testis.

The protein localises to the cytoplasm. In terms of biological role, tudor domain-containing protein involved in germ cell development, more specifically the formation of chromatoid body (during spermiogenesis), Balbiani body (during oogenesis), germ plasm (upon fertilization), and for proper miRNA expression and spliceosome maturation. Component of cytoplasmic mRNP particle through interaction with FRGY2, and binds to maternal mRNA related to cell cycle (RCC1, RHAMM, INCENP-A, MAD2L1, HELLS) and a germ plasm specific mRNA (Dead end/Dnd1), it is proposed a role in translational activation of the maternal mRNAs repressed in mRNP particle. This chain is Tudor domain-containing 6-like, found in Xenopus laevis (African clawed frog).